Reading from the N-terminus, the 212-residue chain is Ribonuclease P protein component 3 (212 aa).

The protein belongs to the eukaryotic/archaeal RNase P protein component 3 family. As to quaternary structure, consists of a catalytic RNA component and at least 4-5 protein subunits.

It localises to the cytoplasm. It carries out the reaction Endonucleolytic cleavage of RNA, removing 5'-extranucleotides from tRNA precursor.. Its function is as follows. Part of ribonuclease P, a protein complex that generates mature tRNA molecules by cleaving their 5'-ends. This chain is Ribonuclease P protein component 3, found in Pyrococcus abyssi (strain GE5 / Orsay).